A 425-amino-acid chain; its full sequence is Dihydroorotase (425 aa).

Zn(2+) contacts are provided by His56 and His58. Substrate is bound by residues 58 to 60 (HYR) and Asn90. Positions 148, 175, and 228 each coordinate Zn(2+). Residue Asn274 coordinates substrate. Asp301 serves as a coordination point for Zn(2+). Residue Asp301 is part of the active site. Substrate is bound by residues His305 and 319–320 (FG).

Belongs to the metallo-dependent hydrolases superfamily. DHOase family. Class I DHOase subfamily. Zn(2+) is required as a cofactor.

The catalysed reaction is (S)-dihydroorotate + H2O = N-carbamoyl-L-aspartate + H(+). The protein operates within pyrimidine metabolism; UMP biosynthesis via de novo pathway; (S)-dihydroorotate from bicarbonate: step 3/3. Its function is as follows. Catalyzes the reversible cyclization of carbamoyl aspartate to dihydroorotate. The chain is Dihydroorotase from Lactobacillus johnsonii (strain CNCM I-12250 / La1 / NCC 533).